The primary structure comprises 306 residues: Protoheme IX farnesyltransferase (306 aa).

Helical transmembrane passes span 28 to 48 (LGLVQGNLIPAFAGAFIAIML), 53 to 73 (FLSSIPELLTMLFGTTLIMAG), 105 to 125 (ASILQLSLVLMIVGEMLLFTI), 127 to 147 (IETGIIGFLGIFGYVVLYSVW), 156 to 176 (TIIGSFPGAIPPLVGYAAIEP), 182 to 202 (AWMLFVIMFIWQPAHFYALAI), 227 to 244 (LSMLFWVMLLLPTPFFMQ), 246 to 266 (LGTVFMVLASVLNLGWLLLAI), and 283 to 303 (FVYSLNYLMIFFVMIVVVTLI).

The protein belongs to the UbiA prenyltransferase family. Protoheme IX farnesyltransferase subfamily. As to quaternary structure, interacts with CtaA.

Its subcellular location is the cell membrane. It carries out the reaction heme b + (2E,6E)-farnesyl diphosphate + H2O = Fe(II)-heme o + diphosphate. The protein operates within porphyrin-containing compound metabolism; heme O biosynthesis; heme O from protoheme: step 1/1. In terms of biological role, converts heme B (protoheme IX) to heme O by substitution of the vinyl group on carbon 2 of heme B porphyrin ring with a hydroxyethyl farnesyl side group. The chain is Protoheme IX farnesyltransferase from Macrococcus caseolyticus (strain JCSC5402) (Macrococcoides caseolyticum).